A 152-amino-acid polypeptide reads, in one-letter code: Lipoprotein signal peptidase (152 aa).

2 helical membrane passes run 55–75 (NKMW…VFYM) and 85–105 (LGIS…DRVF). Catalysis depends on residues D111 and D129. A helical membrane pass occupies residues 124-144 (VFNIADSALCIGVVLIIIQTL).

It belongs to the peptidase A8 family.

It localises to the cell membrane. The catalysed reaction is Release of signal peptides from bacterial membrane prolipoproteins. Hydrolyzes -Xaa-Yaa-Zaa-|-(S,diacylglyceryl)Cys-, in which Xaa is hydrophobic (preferably Leu), and Yaa (Ala or Ser) and Zaa (Gly or Ala) have small, neutral side chains.. It participates in protein modification; lipoprotein biosynthesis (signal peptide cleavage). Functionally, this protein specifically catalyzes the removal of signal peptides from prolipoproteins. In Bacillus cereus (strain AH187), this protein is Lipoprotein signal peptidase.